A 144-amino-acid polypeptide reads, in one-letter code: 3-dehydroquinate dehydratase (144 aa).

Y23 acts as the Proton acceptor in catalysis. Substrate contacts are provided by N74, H80, and D87. H101 acts as the Proton donor in catalysis. Substrate-binding positions include 102 to 103 (LS) and R112.

Belongs to the type-II 3-dehydroquinase family. Homododecamer.

It carries out the reaction 3-dehydroquinate = 3-dehydroshikimate + H2O. It functions in the pathway metabolic intermediate biosynthesis; chorismate biosynthesis; chorismate from D-erythrose 4-phosphate and phosphoenolpyruvate: step 3/7. Functionally, catalyzes a trans-dehydration via an enolate intermediate. The sequence is that of 3-dehydroquinate dehydratase from Mesorhizobium japonicum (strain LMG 29417 / CECT 9101 / MAFF 303099) (Mesorhizobium loti (strain MAFF 303099)).